Here is a 570-residue protein sequence, read N- to C-terminus: Formate--tetrahydrofolate ligase (570 aa).

65-72 (TPFGEGKT) provides a ligand contact to ATP.

This sequence belongs to the formate--tetrahydrofolate ligase family.

It catalyses the reaction (6S)-5,6,7,8-tetrahydrofolate + formate + ATP = (6R)-10-formyltetrahydrofolate + ADP + phosphate. It functions in the pathway one-carbon metabolism; tetrahydrofolate interconversion. The protein is Formate--tetrahydrofolate ligase of Shewanella woodyi (strain ATCC 51908 / MS32).